A 131-amino-acid chain; its full sequence is DNA-directed RNA polymerase subunit omega (131 aa).

The disordered stretch occupies residues 78–131 (DEPEAEAVPALSSAPDAAQSDAMGDVQFDRMTEEDLLRGLEGLVPPAATDDDGE). The segment covering 104–115 (QFDRMTEEDLLR) has biased composition (basic and acidic residues).

This sequence belongs to the RNA polymerase subunit omega family. The RNAP catalytic core consists of 2 alpha, 1 beta, 1 beta' and 1 omega subunit. When a sigma factor is associated with the core the holoenzyme is formed, which can initiate transcription.

The catalysed reaction is RNA(n) + a ribonucleoside 5'-triphosphate = RNA(n+1) + diphosphate. Functionally, promotes RNA polymerase assembly. Latches the N- and C-terminal regions of the beta' subunit thereby facilitating its interaction with the beta and alpha subunits. This is DNA-directed RNA polymerase subunit omega from Beijerinckia indica subsp. indica (strain ATCC 9039 / DSM 1715 / NCIMB 8712).